The sequence spans 203 residues: V-type ATP synthase subunit D (203 aa).

Belongs to the V-ATPase D subunit family.

Produces ATP from ADP in the presence of a proton gradient across the membrane. The polypeptide is V-type ATP synthase subunit D (atpD) (Chlamydia muridarum (strain MoPn / Nigg)).